A 421-amino-acid chain; its full sequence is MASTKEISQYLKRFSQLDAKRFAVVKVGGAVLRDDVDALTSSLSFLQEVGLTPIVLHGAGPQLDEELTAAGIQKKTVNGFRVTLPETMAIVRKVFHTSNLQLIEALQRNGARATSITGGVFEAHYLDQETYGLVGEISAVNLAPIEASLRAASIPVIASLGETPSGQILNINADVAANELVHVLQPYKIIFLTGTGGLLDADGKIINSINLSTEYEQLIQQPWVYGGMKLKIEQIKHLLDRLPLESSVSITRPADLAKELFTHKGSGTLVRRGERVIRATTWKDLDLPRLQHLIQSSFRRTLIPHYFETTPLLRAYVSENYRAAVILTKLGNVPYLDKFAVLDDAQGEGLGRAVWSIMREETPQLFWRSRHNNQANAFYYAESDGYYKQDHWKIFWNGLHHFQQIQQCVAHCAQHPPTLID.

The tract at residues 1-252 (MASTKEISQY…PLESSVSITR (252 aa)) is acetylglutamate kinase. Substrate is bound by residues 59–60 (AG), Arg-81, and Asn-170. The region spanning 274–420 (ERVIRATTWK…HCAQHPPTLI (147 aa)) is the N-acetyltransferase domain.

The protein in the N-terminal section; belongs to the acetylglutamate kinase family. ArgB subfamily.

The protein resides in the cytoplasm. The enzyme catalyses N-acetyl-L-glutamate + ATP = N-acetyl-L-glutamyl 5-phosphate + ADP. Its pathway is amino-acid biosynthesis; L-arginine biosynthesis; N(2)-acetyl-L-ornithine from L-glutamate: step 2/4. The sequence is that of Acetylglutamate kinase (argB) from Xylella fastidiosa (strain 9a5c).